Consider the following 152-residue polypeptide: UPF0178 protein SAS0646 (152 aa).

This sequence belongs to the UPF0178 family.

The polypeptide is UPF0178 protein SAS0646 (Staphylococcus aureus (strain MSSA476)).